Consider the following 87-residue polypeptide: UPF0250 protein BCc_307 (87 aa).

It belongs to the UPF0250 family.

The sequence is that of UPF0250 protein BCc_307 from Buchnera aphidicola subsp. Cinara cedri (strain Cc).